Here is a 270-residue protein sequence, read N- to C-terminus: SPbeta prophage-derived DNA ligase-like protein LigB (270 aa).

Lysine 25 functions as the N6-AMP-lysine intermediate in the catalytic mechanism.

This sequence belongs to the ATP-dependent DNA ligase family.

The chain is SPbeta prophage-derived DNA ligase-like protein LigB (ligB) from Bacillus subtilis (strain 168).